Consider the following 515-residue polypeptide: Pescadillo homolog (515 aa).

Positions 270–327 form a coiled coil; it reads EVLAALNHTLKIIQTQEEDLEVDEFPIDPNSEDAEAIQAQKEEETKLERLKNLFSECK. The region spanning 318–411 is the BRCT domain; it reads RLKNLFSECK…KLLPVEEYFP (94 aa). The interval 477–515 is disordered; it reads RLYEKIMHSKKKKRSEVRKLESKRKVHDEEKAKKKLKSS. Positions 484 to 501 are enriched in basic residues; it reads HSKKKKRSEVRKLESKRK.

It belongs to the pescadillo family.

Its subcellular location is the nucleus. It localises to the nucleolus. The protein localises to the nucleoplasm. Required for maturation of ribosomal RNAs and formation of the large ribosomal subunit. In Nematostella vectensis (Starlet sea anemone), this protein is Pescadillo homolog.